The sequence spans 350 residues: Nicotinate-nucleotide--dimethylbenzimidazole phosphoribosyltransferase (350 aa).

The Proton acceptor role is filled by Glu-316.

This sequence belongs to the CobT family.

The catalysed reaction is 5,6-dimethylbenzimidazole + nicotinate beta-D-ribonucleotide = alpha-ribazole 5'-phosphate + nicotinate + H(+). It functions in the pathway nucleoside biosynthesis; alpha-ribazole biosynthesis; alpha-ribazole from 5,6-dimethylbenzimidazole: step 1/2. In terms of biological role, catalyzes the synthesis of alpha-ribazole-5'-phosphate from nicotinate mononucleotide (NAMN) and 5,6-dimethylbenzimidazole (DMB). The sequence is that of Nicotinate-nucleotide--dimethylbenzimidazole phosphoribosyltransferase from Pseudomonas savastanoi pv. phaseolicola (strain 1448A / Race 6) (Pseudomonas syringae pv. phaseolicola (strain 1448A / Race 6)).